Here is a 187-residue protein sequence, read N- to C-terminus: Elongation factor P (187 aa).

It belongs to the elongation factor P family.

It localises to the cytoplasm. It functions in the pathway protein biosynthesis; polypeptide chain elongation. Its function is as follows. Involved in peptide bond synthesis. Stimulates efficient translation and peptide-bond synthesis on native or reconstituted 70S ribosomes in vitro. Probably functions indirectly by altering the affinity of the ribosome for aminoacyl-tRNA, thus increasing their reactivity as acceptors for peptidyl transferase. This is Elongation factor P from Fusobacterium nucleatum subsp. nucleatum (strain ATCC 25586 / DSM 15643 / BCRC 10681 / CIP 101130 / JCM 8532 / KCTC 2640 / LMG 13131 / VPI 4355).